The following is a 387-amino-acid chain: 1,3-propanediol dehydrogenase (387 aa).

Belongs to the iron-containing alcohol dehydrogenase family. As to quaternary structure, homooctamer. Fe cation serves as cofactor.

The enzyme catalyses propane-1,3-diol + NAD(+) = 3-hydroxypropanal + NADH + H(+). Inhibited by the metal chelator 1,10-phenanthroline. In terms of biological role, catalyzes the reduction of 3-hydroxypropanal. Is considerably less active with glyceraldehyde, propionaldehyde, acetaldehyde, and butyraldehyde. Also catalyzes the oxidation of various primary, secondary, and tertiary alcohols. Is most active with substrates containing two primary alcohol groups separated by one or two carbon atoms. 1,3-propanediol is the preferred substrate. In Citrobacter freundii, this protein is 1,3-propanediol dehydrogenase.